The sequence spans 196 residues: Imidazole glycerol phosphate synthase subunit HisH (196 aa).

The Glutamine amidotransferase type-1 domain occupies Asn-2–Met-196. Cys-77 (nucleophile) is an active-site residue. Residues His-178 and Glu-180 contribute to the active site.

In terms of assembly, heterodimer of HisH and HisF.

It is found in the cytoplasm. The catalysed reaction is 5-[(5-phospho-1-deoxy-D-ribulos-1-ylimino)methylamino]-1-(5-phospho-beta-D-ribosyl)imidazole-4-carboxamide + L-glutamine = D-erythro-1-(imidazol-4-yl)glycerol 3-phosphate + 5-amino-1-(5-phospho-beta-D-ribosyl)imidazole-4-carboxamide + L-glutamate + H(+). The enzyme catalyses L-glutamine + H2O = L-glutamate + NH4(+). It participates in amino-acid biosynthesis; L-histidine biosynthesis; L-histidine from 5-phospho-alpha-D-ribose 1-diphosphate: step 5/9. In terms of biological role, IGPS catalyzes the conversion of PRFAR and glutamine to IGP, AICAR and glutamate. The HisH subunit catalyzes the hydrolysis of glutamine to glutamate and ammonia as part of the synthesis of IGP and AICAR. The resulting ammonia molecule is channeled to the active site of HisF. The protein is Imidazole glycerol phosphate synthase subunit HisH of Salmonella choleraesuis (strain SC-B67).